Reading from the N-terminus, the 331-residue chain is Tagatose 1,6-diphosphate aldolase 2 (331 aa).

Belongs to the aldolase LacD family.

It carries out the reaction D-tagatofuranose 1,6-bisphosphate = D-glyceraldehyde 3-phosphate + dihydroxyacetone phosphate. The protein operates within carbohydrate metabolism; D-tagatose 6-phosphate degradation; D-glyceraldehyde 3-phosphate and glycerone phosphate from D-tagatose 6-phosphate: step 2/2. The chain is Tagatose 1,6-diphosphate aldolase 2 (lacD2) from Enterococcus faecalis (strain ATCC 700802 / V583).